Consider the following 367-residue polypeptide: Probable trehalose-phosphate phosphatase 4 (367 aa).

The protein belongs to the trehalose phosphatase family. Requires a divalent metal cation as cofactor.

The enzyme catalyses alpha,alpha-trehalose 6-phosphate + H2O = alpha,alpha-trehalose + phosphate. It participates in glycan biosynthesis; trehalose biosynthesis. Removes the phosphate from trehalose 6-phosphate to produce free trehalose. Trehalose accumulation in plant may improve abiotic stress tolerance. The protein is Probable trehalose-phosphate phosphatase 4 (TPP4) of Oryza sativa subsp. japonica (Rice).